Here is a 204-residue protein sequence, read N- to C-terminus: CASP-like protein 2U2 (204 aa).

At 1 to 36 (MGVLGGDAHVPIGSQVSPGSVVVTNNESFGHRKLLK) the chain is on the cytoplasmic side. The chain crosses the membrane as a helical span at residues 37 to 57 (GVDFLVRIKAFAFCLAVIVLL). At 58-84 (KNNVQTTVIAPGIVLQAKYNNTKAPVS) the chain is on the extracellular side. Residue N77 is glycosylated (N-linked (GlcNAc...) asparagine). The helical transmembrane segment at 85-105 (LLVLASICCGYAFLQAVVSLL) threads the bilayer. Residues 106-117 (SFIRDKRVLNNT) lie on the Cytoplasmic side of the membrane. The chain crosses the membrane as a helical span at residues 118 to 138 (VLAWLTFLLDQVLTYLLLGSA). Residues 139–170 (AATAEAAYIAKRGEDKVQWKAVCGPFKRFCDH) are Extracellular-facing. A helical transmembrane segment spans residues 171–191 (FAATVFLSFIAVIAFAVSAAI). Residues 192–204 (SAYYLFRKSKGFK) are Cytoplasmic-facing.

It belongs to the Casparian strip membrane proteins (CASP) family. Homodimer and heterodimers.

The protein localises to the cell membrane. This is CASP-like protein 2U2 from Selaginella moellendorffii (Spikemoss).